A 558-amino-acid polypeptide reads, in one-letter code: Formate--tetrahydrofolate ligase (558 aa).

65-72 is a binding site for ATP; that stretch reads TPAGEGKT.

This sequence belongs to the formate--tetrahydrofolate ligase family.

It carries out the reaction (6S)-5,6,7,8-tetrahydrofolate + formate + ATP = (6R)-10-formyltetrahydrofolate + ADP + phosphate. Its pathway is one-carbon metabolism; tetrahydrofolate interconversion. This is Formate--tetrahydrofolate ligase from Methylobacterium nodulans (strain LMG 21967 / CNCM I-2342 / ORS 2060).